The following is a 344-amino-acid chain: Methionine import ATP-binding protein MetN 1 (344 aa).

The region spanning I2 to I241 is the ABC transporter domain. Residue G38 to S45 coordinates ATP.

The protein belongs to the ABC transporter superfamily. Methionine importer (TC 3.A.1.24) family. The complex is composed of two ATP-binding proteins (MetN), two transmembrane proteins (MetI) and a solute-binding protein (MetQ).

The protein localises to the cell inner membrane. It catalyses the reaction L-methionine(out) + ATP + H2O = L-methionine(in) + ADP + phosphate + H(+). It carries out the reaction D-methionine(out) + ATP + H2O = D-methionine(in) + ADP + phosphate + H(+). Functionally, part of the ABC transporter complex MetNIQ involved in methionine import. Responsible for energy coupling to the transport system. In Burkholderia lata (strain ATCC 17760 / DSM 23089 / LMG 22485 / NCIMB 9086 / R18194 / 383), this protein is Methionine import ATP-binding protein MetN 1.